The primary structure comprises 449 residues: Bifunctional protein GlmU (449 aa).

Residues 1–226 (MVAVAILAAG…FQEISGINDR (226 aa)) are pyrophosphorylase. UDP-N-acetyl-alpha-D-glucosamine-binding positions include 7–10 (LAAG), Lys21, Gln73, and 78–79 (GT). Asp103 contacts Mg(2+). Residues Gly140, Glu155, Asn170, and Asn224 each coordinate UDP-N-acetyl-alpha-D-glucosamine. Asn224 serves as a coordination point for Mg(2+). Residues 227-247 (FQLSAAYEILQDRIKEKWMKA) form a linker region. An N-acetyltransferase region spans residues 248–449 (GVMIHQPDTV…KEIKGWRLQS (202 aa)). UDP-N-acetyl-alpha-D-glucosamine contacts are provided by Arg329 and Lys347. His359 (proton acceptor) is an active-site residue. Residues Tyr362 and Asn373 each contribute to the UDP-N-acetyl-alpha-D-glucosamine site. Residues Ala376, 382–383 (NY), Ala419, and Arg436 each bind acetyl-CoA.

The protein in the N-terminal section; belongs to the N-acetylglucosamine-1-phosphate uridyltransferase family. In the C-terminal section; belongs to the transferase hexapeptide repeat family. In terms of assembly, homotrimer. The cofactor is Mg(2+).

It localises to the cytoplasm. It catalyses the reaction alpha-D-glucosamine 1-phosphate + acetyl-CoA = N-acetyl-alpha-D-glucosamine 1-phosphate + CoA + H(+). The catalysed reaction is N-acetyl-alpha-D-glucosamine 1-phosphate + UTP + H(+) = UDP-N-acetyl-alpha-D-glucosamine + diphosphate. It functions in the pathway nucleotide-sugar biosynthesis; UDP-N-acetyl-alpha-D-glucosamine biosynthesis; N-acetyl-alpha-D-glucosamine 1-phosphate from alpha-D-glucosamine 6-phosphate (route II): step 2/2. It participates in nucleotide-sugar biosynthesis; UDP-N-acetyl-alpha-D-glucosamine biosynthesis; UDP-N-acetyl-alpha-D-glucosamine from N-acetyl-alpha-D-glucosamine 1-phosphate: step 1/1. The protein operates within bacterial outer membrane biogenesis; LPS lipid A biosynthesis. Its function is as follows. Catalyzes the last two sequential reactions in the de novo biosynthetic pathway for UDP-N-acetylglucosamine (UDP-GlcNAc). The C-terminal domain catalyzes the transfer of acetyl group from acetyl coenzyme A to glucosamine-1-phosphate (GlcN-1-P) to produce N-acetylglucosamine-1-phosphate (GlcNAc-1-P), which is converted into UDP-GlcNAc by the transfer of uridine 5-monophosphate (from uridine 5-triphosphate), a reaction catalyzed by the N-terminal domain. This chain is Bifunctional protein GlmU, found in Picosynechococcus sp. (strain ATCC 27264 / PCC 7002 / PR-6) (Agmenellum quadruplicatum).